Reading from the N-terminus, the 876-residue chain is Leucine--tRNA ligase (876 aa).

Positions 42–52 (PYPSGKLHMGH) match the 'HIGH' region motif. The 'KMSKS' region motif lies at 634–638 (KMSKS). K637 is an ATP binding site.

The protein belongs to the class-I aminoacyl-tRNA synthetase family.

The protein resides in the cytoplasm. It carries out the reaction tRNA(Leu) + L-leucine + ATP = L-leucyl-tRNA(Leu) + AMP + diphosphate. The protein is Leucine--tRNA ligase of Neisseria gonorrhoeae (strain NCCP11945).